The sequence spans 882 residues: Valine--tRNA ligase (882 aa).

Positions P45 to H55 match the 'HIGH' region motif. A 'KMSKS' region motif is present at residues K519 to S523. An ATP-binding site is contributed by K522. A coiled-coil region spans residues L808–M877.

The protein belongs to the class-I aminoacyl-tRNA synthetase family. ValS type 1 subfamily. As to quaternary structure, monomer.

It is found in the cytoplasm. The enzyme catalyses tRNA(Val) + L-valine + ATP = L-valyl-tRNA(Val) + AMP + diphosphate. Functionally, catalyzes the attachment of valine to tRNA(Val). As ValRS can inadvertently accommodate and process structurally similar amino acids such as threonine, to avoid such errors, it has a 'posttransfer' editing activity that hydrolyzes mischarged Thr-tRNA(Val) in a tRNA-dependent manner. The sequence is that of Valine--tRNA ligase from Streptococcus pyogenes serotype M6 (strain ATCC BAA-946 / MGAS10394).